The following is a 231-amino-acid chain: Small ribosomal subunit protein uS2c (231 aa).

Belongs to the universal ribosomal protein uS2 family.

The protein resides in the plastid. The protein localises to the chloroplast. In Gracilaria tenuistipitata var. liui (Red alga), this protein is Small ribosomal subunit protein uS2c (rps2).